Here is a 316-residue protein sequence, read N- to C-terminus: Porphobilinogen deaminase (316 aa).

C249 is modified (S-(dipyrrolylmethanemethyl)cysteine).

Belongs to the HMBS family. In terms of assembly, monomer. The cofactor is dipyrromethane.

It catalyses the reaction 4 porphobilinogen + H2O = hydroxymethylbilane + 4 NH4(+). Its pathway is porphyrin-containing compound metabolism; protoporphyrin-IX biosynthesis; coproporphyrinogen-III from 5-aminolevulinate: step 2/4. In terms of biological role, tetrapolymerization of the monopyrrole PBG into the hydroxymethylbilane pre-uroporphyrinogen in several discrete steps. The chain is Porphobilinogen deaminase from Nitrobacter winogradskyi (strain ATCC 25391 / DSM 10237 / CIP 104748 / NCIMB 11846 / Nb-255).